Consider the following 104-residue polypeptide: Circadian clock oscillator protein KaiB (104 aa).

It belongs to the KaiB family. In terms of assembly, the KaiABC complex composition changes during the circadian cycle to control KaiC phosphorylation. Complexes KaiC(6), KaiA(2-4):KaiC(6), KaiB(6):KaiC(6) and KaiC(6):KaiB(6):KaiA(12) are among the most important forms, many form cooperatively. Undergoes a major conformational rearrangment; in the free state forms homotetramers as a dimer of dimers. When bound to the CI domain of KaiC switches to a monomeric thioredoxin-fold (KaiB(fs)). KaiB(fs) binds CikA, leading it to dephosphorylate phospho-RpaA.

Functionally, key component of the KaiABC oscillator complex, which constitutes the main circadian regulator in cyanobacteria. Complex composition changes during the circadian cycle to control KaiC phosphorylation. KaiA stimulates KaiC autophosphorylation, while KaiB sequesters KaiA, leading to KaiC autodephosphorylation. Phospho-Ser-431 KaiC accumulation triggers binding of KaiB to form the KaiB(6):KaiC(6) complex, leading to changes in output regulators CikA and SasA. KaiB switches to a thioredoxin-like fold (KaiB(fs)) when bound to KaiC. KaiB(6):KaiC(6) formation exposes a site for KaiA binding that sequesters KaiA from KaiC, making the KaiC(6):KaiB(6):KaiA(12) complex that results in KaiC autodephosphorylation. Its function is as follows. A metamorphic protein which reversibly switches between an inactive tetrameric fold and a rare, thioredoxin-like monomeric fold (KaiB(fs)). KaiB(fs) binds phospho-KaiC, KaiA and CikA. KaiA and CikA compete for binding to KaiB(fs), and KaiB(fs) and SasA compete for binding to KaiC, thus the clock oscillator and output signal pathway are tightly coupled. The chain is Circadian clock oscillator protein KaiB from Trichodesmium erythraeum (strain IMS101).